A 61-amino-acid chain; its full sequence is Metallothionein-1A (61 aa).

Methionine 1 bears the N-acetylmethionine mark. The tract at residues 1–29 (MDPNCSCPTGGSCSCAGSCTCKACRCTSC) is beta. Positions 5, 7, 13, 15, 19, 21, 24, 26, 29, 33, 34, 36, 37, 41, 44, 48, 50, and 57 each coordinate a divalent metal cation. The tract at residues 30-61 (KKSCCSCCPAGCARCAQGCICKGASDKCSCCA) is alpha. At serine 58 the chain carries Phosphoserine. A divalent metal cation is bound by residues cysteine 59 and cysteine 60.

It belongs to the metallothionein superfamily. Type 1 family. Monomer.

Its function is as follows. Metallothioneins have a high content of cysteine residues that bind various heavy metals; these proteins are transcriptionally regulated by both heavy metals and glucocorticoids. The protein is Metallothionein-1A (MT1A) of Sus scrofa (Pig).